A 282-amino-acid chain; its full sequence is Large ribosomal subunit protein uL2 (282 aa).

The interval 223-282 (TVRGSVMNPNDHPHGGGEGRAPIGRKSPVTPWGKKALGVKTRNTKKTSEKLIVRKRSNKK) is disordered.

This sequence belongs to the universal ribosomal protein uL2 family. In terms of assembly, part of the 50S ribosomal subunit. Forms a bridge to the 30S subunit in the 70S ribosome.

In terms of biological role, one of the primary rRNA binding proteins. Required for association of the 30S and 50S subunits to form the 70S ribosome, for tRNA binding and peptide bond formation. It has been suggested to have peptidyltransferase activity; this is somewhat controversial. Makes several contacts with the 16S rRNA in the 70S ribosome. The polypeptide is Large ribosomal subunit protein uL2 (Mycoplasma mycoides subsp. mycoides SC (strain CCUG 32753 / NCTC 10114 / PG1)).